The sequence spans 335 residues: uncharacterized protein (335 aa).

The signal sequence occupies residues 1-21 (MDKKARAHTVIVCLVGALSLA). A lipid anchor (N-palmitoyl cysteine) is attached at cysteine 22. Cysteine 22 carries the S-diacylglycerol cysteine lipid modification.

The protein resides in the cell membrane. This is an uncharacterized protein from Treponema pallidum (strain Nichols).